Consider the following 258-residue polypeptide: Putative cysteine-rich repeat secretory protein 35 (258 aa).

Positions 1–29 (MYSSYSLSKRLIYVPILAIQFLLVRSVSS) are cleaved as a signal peptide. Gnk2-homologous domains follow at residues 36-138 (YLNH…TIKP) and 146-255 (FKNT…LYPF).

This sequence belongs to the cysteine-rich repeat secretory protein family.

It localises to the secreted. The polypeptide is Putative cysteine-rich repeat secretory protein 35 (CRRSP35) (Arabidopsis thaliana (Mouse-ear cress)).